Here is a 412-residue protein sequence, read N- to C-terminus: AA9 family lytic polysaccharide monooxygenase A (412 aa).

The signal sequence occupies residues 1 to 20 (MKTTTYSLLALAAASKLASA). Residues His-21 and His-103 each coordinate Cu(2+). Cys-63 and Cys-186 are oxidised to a cystine. Asn-151 is a glycosylation site (N-linked (GlcNAc...) asparagine). His-172 contacts O2. Tyr-183 is a binding site for Cu(2+). Asn-334 and Asn-385 each carry an N-linked (GlcNAc...) asparagine glycan. The CBM1 domain maps to 373 to 409 (GVAKMYERCGGINHTGPTTCESGSVCKKWNPYYYQCV).

It belongs to the polysaccharide monooxygenase AA9 family. Requires Cu(2+) as cofactor.

The protein localises to the secreted. It carries out the reaction [(1-&gt;4)-beta-D-glucosyl]n+m + reduced acceptor + O2 = 4-dehydro-beta-D-glucosyl-[(1-&gt;4)-beta-D-glucosyl]n-1 + [(1-&gt;4)-beta-D-glucosyl]m + acceptor + H2O.. Lytic polysaccharide monooxygenase (LPMO) that depolymerizes crystalline and amorphous polysaccharides via the oxidation of scissile alpha- or beta-(1-4)-glycosidic bonds, yielding C4 oxidation products. Catalysis by LPMOs requires the reduction of the active-site copper from Cu(II) to Cu(I) by a reducing agent and H(2)O(2) or O(2) as a cosubstrate. This is AA9 family lytic polysaccharide monooxygenase A (eglD) from Aspergillus niger (strain ATCC MYA-4892 / CBS 513.88 / FGSC A1513).